A 76-amino-acid polypeptide reads, in one-letter code: Envelope small membrane protein (76 aa).

The Virion surface segment spans residues 1–14 (MLQLVNDNGVVVNA). A helical membrane pass occupies residues 15-35 (ILWLFVLFFVLVISITFVQLI). Residues 36–76 (NLCFTCHRLCNNVVYKPVGKVYGVYKSYMRIQPLTSDIIQV) are Intravirion-facing.

This sequence belongs to the alphacoronaviruses E protein family. In terms of assembly, homopentamer. Interacts with membrane protein M in the budding compartment of the host cell, which is located between endoplasmic reticulum and the Golgi complex. Interacts with Nucleoprotein.

It localises to the host Golgi apparatus membrane. Plays a central role in virus morphogenesis and assembly. Acts as a viroporin and self-assembles in host membranes forming pentameric protein-lipid pores that allow ion transport. Also plays a role in the induction of apoptosis. The polypeptide is Envelope small membrane protein (Scotophilus kuhlii (Lesser asiatic yellow bat)).